Consider the following 143-residue polypeptide: Putative pre-16S rRNA nuclease (143 aa).

This sequence belongs to the YqgF nuclease family.

The protein localises to the cytoplasm. In terms of biological role, could be a nuclease involved in processing of the 5'-end of pre-16S rRNA. The protein is Putative pre-16S rRNA nuclease of Lactobacillus gasseri (strain ATCC 33323 / DSM 20243 / BCRC 14619 / CIP 102991 / JCM 1131 / KCTC 3163 / NCIMB 11718 / NCTC 13722 / AM63).